The sequence spans 932 residues: RNA-binding protein 12 (932 aa).

The disordered stretch occupies residues 96 to 116 (DIPPANASRSGPPPSSGMSSR). A compositionally biased stretch (low complexity) spans 98-116 (PPANASRSGPPPSSGMSSR). Residues 304–379 (LYVSVHGMPF…RYVEVSPATE (76 aa)) form the RRM 1 domain. 2 positions are modified to phosphoserine: serine 352 and serine 375. 2 stretches are compositionally biased toward polar residues: residues 392–401 (KQNMGPSGQT) and 408–417 (LPRSKSPSGQ). The disordered stretch occupies residues 392–424 (KQNMGPSGQTHPPPQTLPRSKSPSGQKRSRSRS). Residues serine 420, serine 422, and serine 424 each carry the phosphoserine modification. The 78-residue stretch at 430–507 (FCVYLKGLPF…RFIQVHPITK (78 aa)) folds into the RRM 2 domain. Serine 525 is modified (phosphoserine). Residues 717 to 734 (NGPPFNFPGNFGGSNAFG) are compositionally biased toward low complexity. The disordered stretch occupies residues 717-853 (NGPPFNFPGN…PGFASSSGKP (137 aa)). Residues 783-811 (SGFGGGPQNFGNGPGSLGGPPGFGSGPPG) show a composition bias toward gly residues. A compositionally biased stretch (pro residues) spans 824–836 (AFGPGPGPGPGPG). The region spanning 856–932 (TVIKVQNMPF…GSRKVKLVLG (77 aa)) is the RRM 3 domain.

It localises to the nucleus. This chain is RNA-binding protein 12 (RBM12), found in Homo sapiens (Human).